The following is a 210-amino-acid chain: Large ribosomal subunit protein uL16 (210 aa).

This sequence belongs to the universal ribosomal protein uL16 family. In terms of assembly, component of the large ribosomal subunit. Mature ribosomes consist of a small (40S) and a large (60S) subunit. The 40S subunit contains about 33 different proteins and 1 molecule of RNA (18S). The 60S subunit contains about 49 different proteins and 3 molecules of RNA (28S, 5.8S and 5S).

The protein localises to the cytoplasm. Its function is as follows. Component of the large ribosomal subunit. Plays a role in the formation of actively translating ribosomes. (Microbial infection) Seems to bind to the leucine zipper of viral and cellular JUN. The polypeptide is Large ribosomal subunit protein uL16 (Gallus gallus (Chicken)).